Reading from the N-terminus, the 565-residue chain is MKATQTLIATTKELPKEAVLISHQYMLKAGLIKKLASGIYTWMPLGLKVLQKIQNIVRDEMNKAGASELLLPSILPSELLQETHRWDKFGPELLKLHDRHNRDFCYGPTHEEPIVDMARDTIKSYKQLPLNLYQIQTKFRDEIRPRFGVMRAREFIMKDAYSFHENSQCLRNTYNTMYATYCNILDKIGLAYRPVKADTGAIGGDNSHEFQVLANAGEDIICYSNGSDYAANIELATYAKPDLSKRVNSQNTIEKIHTPNIKTIEKLYKEMSFDIKKTIKTMVIKDAGGNFFALVIRGDHELNETKINKLDQIIAPYTLATKEEIFSIFNANPGSLGIYNCPISIIADYSAIAITDLVCGANEDDYHFTNVNWDRDVTNYQIADIRNVVTGDISPDCKGTLELTNGIEVGHIFELEDVYSKPMNANIIGQDGKSKPMLMGCYGFGVSRVMAAAIEQSHDENGIIWPESIAPYQVAILPINYNKSDKVKEVADKLYQDLLGDGIDVLLDDRGARPGVMFADADLIGYSHHVVIGDKLLEQGLIEYKNRKTQEKQEITIAELIKILK.

It belongs to the class-II aminoacyl-tRNA synthetase family. ProS type 1 subfamily. Homodimer.

The protein resides in the cytoplasm. The catalysed reaction is tRNA(Pro) + L-proline + ATP = L-prolyl-tRNA(Pro) + AMP + diphosphate. Catalyzes the attachment of proline to tRNA(Pro) in a two-step reaction: proline is first activated by ATP to form Pro-AMP and then transferred to the acceptor end of tRNA(Pro). As ProRS can inadvertently accommodate and process non-cognate amino acids such as alanine and cysteine, to avoid such errors it has two additional distinct editing activities against alanine. One activity is designated as 'pretransfer' editing and involves the tRNA(Pro)-independent hydrolysis of activated Ala-AMP. The other activity is designated 'posttransfer' editing and involves deacylation of mischarged Ala-tRNA(Pro). The misacylated Cys-tRNA(Pro) is not edited by ProRS. This Francisella tularensis subsp. mediasiatica (strain FSC147) protein is Proline--tRNA ligase.